Here is a 122-residue protein sequence, read N- to C-terminus: Biogenesis of lysosome-related organelles complex 1 subunit CNL1 (122 aa).

Over residues Met-1 to Glu-10 the composition is skewed to basic and acidic residues. The tract at residues Met-1–Ile-21 is disordered. Positions Glu-63 to Ile-95 form a coiled coil.

This sequence belongs to the BLOC1S4 family. As to quaternary structure, component of the biogenesis of lysosome-related organelles complex-1 (BLOC-1) composed of at least BLI1, BLS1, CNL1, KXD1, SNN1 and VAB2.

Its subcellular location is the cytoplasm. Component of the biogenesis of lysosome-related organelles complex-1 (BLOC-1), a complex that is involved in endosomal cargo sorting. This Saccharomyces cerevisiae (strain ATCC 204508 / S288c) (Baker's yeast) protein is Biogenesis of lysosome-related organelles complex 1 subunit CNL1 (CNL1).